Here is a 463-residue protein sequence, read N- to C-terminus: Glutamate--tRNA ligase (463 aa).

Residues 10–20 (PSPTGHLHIGG) carry the 'HIGH' region motif. The 'KMSKS' region motif lies at 236 to 240 (KLSKR). K239 contributes to the ATP binding site.

Belongs to the class-I aminoacyl-tRNA synthetase family. Glutamate--tRNA ligase type 1 subfamily. In terms of assembly, monomer.

The protein localises to the cytoplasm. It carries out the reaction tRNA(Glu) + L-glutamate + ATP = L-glutamyl-tRNA(Glu) + AMP + diphosphate. Functionally, catalyzes the attachment of glutamate to tRNA(Glu) in a two-step reaction: glutamate is first activated by ATP to form Glu-AMP and then transferred to the acceptor end of tRNA(Glu). This chain is Glutamate--tRNA ligase, found in Nitratidesulfovibrio vulgaris (strain DP4) (Desulfovibrio vulgaris).